The sequence spans 549 residues: Arginine--tRNA ligase (549 aa).

The 'HIGH' region signature appears at 132–142 (ANPTGPLHIGH).

Belongs to the class-I aminoacyl-tRNA synthetase family. As to quaternary structure, monomer.

It localises to the cytoplasm. It catalyses the reaction tRNA(Arg) + L-arginine + ATP = L-arginyl-tRNA(Arg) + AMP + diphosphate. The chain is Arginine--tRNA ligase from Paenarthrobacter aurescens (strain TC1).